A 268-amino-acid polypeptide reads, in one-letter code: Small ribosomal subunit protein eS1 (268 aa).

A disordered region spans residues 1-21 (MAVGKNKGLSKGGKKGGKKKV).

The protein belongs to the eukaryotic ribosomal protein eS1 family. In terms of assembly, component of the small ribosomal subunit. Mature ribosomes consist of a small (40S) and a large (60S) subunit. The 40S subunit contains about 33 different proteins and 1 molecule of RNA (18S). The 60S subunit contains about 49 different proteins and 3 molecules of RNA (28S, 5.8S and 5S).

The protein resides in the cytoplasm. Functionally, essential for oogenesis; required for late follicle cell development. This Drosophila mojavensis (Fruit fly) protein is Small ribosomal subunit protein eS1.